Reading from the N-terminus, the 219-residue chain is Endonuclease V (219 aa).

Residues Asp-41 and Asp-107 each coordinate Mg(2+).

Belongs to the endonuclease V family. Requires Mg(2+) as cofactor.

The protein resides in the cytoplasm. It catalyses the reaction Endonucleolytic cleavage at apurinic or apyrimidinic sites to products with a 5'-phosphate.. In terms of biological role, DNA repair enzyme involved in the repair of deaminated bases. Selectively cleaves double-stranded DNA at the second phosphodiester bond 3' to a deoxyinosine leaving behind the intact lesion on the nicked DNA. The polypeptide is Endonuclease V (Desulfurococcus amylolyticus (strain DSM 18924 / JCM 16383 / VKM B-2413 / 1221n) (Desulfurococcus kamchatkensis)).